Here is a 219-residue protein sequence, read N- to C-terminus: RING finger protein nenya (219 aa).

The RING-type zinc finger occupies cysteine 6–lysine 48. The interval asparagine 161–serine 181 is disordered.

May interact with itself, with narya and vilya through its RING-type zinc finger.

Its function is as follows. Required for the formation of DNA double-strand breaks together with narya and vilya during the meiotic recombination process. Plays a redundant role with narya in chromosome segregation during female meiosis. The protein is RING finger protein nenya of Drosophila melanogaster (Fruit fly).